A 122-amino-acid chain; its full sequence is Large ribosomal subunit protein uL22 (122 aa).

The protein belongs to the universal ribosomal protein uL22 family. In terms of assembly, part of the 50S ribosomal subunit.

This protein binds specifically to 23S rRNA; its binding is stimulated by other ribosomal proteins, e.g. L4, L17, and L20. It is important during the early stages of 50S assembly. It makes multiple contacts with different domains of the 23S rRNA in the assembled 50S subunit and ribosome. In terms of biological role, the globular domain of the protein is located near the polypeptide exit tunnel on the outside of the subunit, while an extended beta-hairpin is found that lines the wall of the exit tunnel in the center of the 70S ribosome. This is Large ribosomal subunit protein uL22 from Prochlorococcus marinus (strain MIT 9303).